The primary structure comprises 128 residues: Ribonuclease P protein component (128 aa).

This sequence belongs to the RnpA family. Consists of a catalytic RNA component (M1 or rnpB) and a protein subunit.

The enzyme catalyses Endonucleolytic cleavage of RNA, removing 5'-extranucleotides from tRNA precursor.. Functionally, RNaseP catalyzes the removal of the 5'-leader sequence from pre-tRNA to produce the mature 5'-terminus. It can also cleave other RNA substrates such as 4.5S RNA. The protein component plays an auxiliary but essential role in vivo by binding to the 5'-leader sequence and broadening the substrate specificity of the ribozyme. This is Ribonuclease P protein component from Chromohalobacter salexigens (strain ATCC BAA-138 / DSM 3043 / CIP 106854 / NCIMB 13768 / 1H11).